The sequence spans 668 residues: MNAIPRVALVWLLVAQVLVILPHLAYMPLWIAAMWLGCAAWRVQVFRMRAGYPRAWVKLALALLAGAGVWLSRGSLVGLDAGAVLLIAAFILKLVEMKTRRDALVLVFLGFFAVVVGYLFDDGFLAALYSLLPVTALLAALIGLQQSAFASRPWPTLRLAGGLLLQALPLMLLLFLFFPRLGPLWSLPMPGNKGVTGLSESMAPGDIAELGRSAELAFRVRFEGALPPREQLYWRALTMERFDGRRWAQAPQWSGEDALHWQKRGPELRYDVIMQPSSQPWLFALDVAQTDQTDTRLMSDFHLQRRQPVEQRLFYRVSSWPQALRESSIDPRTRWRNLQLPMHGNPRARALADELRQAHAQPQALVAALLQRFNHEPFAYTLKPPATGADGVDDFLFDTRSGFCAHYAGAMAFVLRAAGIPARVVAGYQGGELNPAGNYLLVHQFDAHAWVEYWQPEQGWLSVDPTYQVAPERIEQGLEQALAGDSEYLADAPLSPLRYRGLPWLNDMRLAWDSLNYGWQRWVLAYQGEQQGAFLQRWFGGLDPTRLGLLLGAAAILSVGLLALFLLKPWQGRGDLRSRQLRRFERLLEMHGLRRSPGEGLRSYGERAARVLPAQAPAIAAFVGAFEAQRYGHGGADDPGLRLRALRRALPWRLVRTPTRDGRGEEQA.

Residues 1–6 (MNAIPR) lie on the Cytoplasmic side of the membrane. Residues 7 to 27 (VALVWLLVAQVLVILPHLAYM) form a helical membrane-spanning segment. At 28–50 (PLWIAAMWLGCAAWRVQVFRMRA) the chain is on the periplasmic side. The helical transmembrane segment at 51-71 (GYPRAWVKLALALLAGAGVWL) threads the bilayer. Residues 72–74 (SRG) are Cytoplasmic-facing. A helical transmembrane segment spans residues 75-95 (SLVGLDAGAVLLIAAFILKLV). The Periplasmic portion of the chain corresponds to 96 to 103 (EMKTRRDA). Transmembrane regions (helical) follow at residues 104 to 124 (LVLV…DDGF) and 125 to 145 (LAAL…IGLQ). Topologically, residues 146–158 (QSAFASRPWPTLR) are cytoplasmic. A helical transmembrane segment spans residues 159-179 (LAGGLLLQALPLMLLLFLFFP). At 180-548 (RLGPLWSLPM…FGGLDPTRLG (369 aa)) the chain is on the periplasmic side. Cysteine 404 serves as the catalytic Nucleophile. Residues histidine 448 and aspartate 464 contribute to the active site. Residues 549–569 (LLLGAAAILSVGLLALFLLKP) form a helical membrane-spanning segment. Residues 570-668 (WQGRGDLRSR…TRDGRGEEQA (99 aa)) lie on the Cytoplasmic side of the membrane.

This sequence belongs to the transglutaminase-like superfamily.

Its subcellular location is the cell inner membrane. It carries out the reaction L-glutaminyl-[protein] + L-lysyl-[protein] = [protein]-L-lysyl-N(6)-5-L-glutamyl-[protein] + NH4(+). Displays transglutaminase activity (TGase) in vitro. Plays a critical role in the viability of P.aeruginosa. Might contribute to an essential function linked to the cell wall. This Pseudomonas aeruginosa (strain ATCC 15692 / DSM 22644 / CIP 104116 / JCM 14847 / LMG 12228 / 1C / PRS 101 / PAO1) protein is Protein-glutamine gamma-glutamyltransferase (tgpA).